The following is a 161-amino-acid chain: Nucleoside diphosphate kinase (161 aa).

Lysine 12, phenylalanine 60, arginine 88, threonine 94, and arginine 105 together coordinate ATP. Histidine 121 acts as the Pros-phosphohistidine intermediate in catalysis.

Belongs to the NDK family. Mg(2+) is required as a cofactor.

The protein resides in the cytoplasm. It catalyses the reaction a 2'-deoxyribonucleoside 5'-diphosphate + ATP = a 2'-deoxyribonucleoside 5'-triphosphate + ADP. It carries out the reaction a ribonucleoside 5'-diphosphate + ATP = a ribonucleoside 5'-triphosphate + ADP. In terms of biological role, major role in the synthesis of nucleoside triphosphates other than ATP. The ATP gamma phosphate is transferred to the NDP beta phosphate via a ping-pong mechanism, using a phosphorylated active-site intermediate. This is Nucleoside diphosphate kinase from Pyrococcus furiosus (strain ATCC 43587 / DSM 3638 / JCM 8422 / Vc1).